Here is a 495-residue protein sequence, read N- to C-terminus: Trimethylamine methyltransferase MttB1 (495 aa).

A non-standard amino acid (pyrrolysine) is located at residue pyrrolysine 334.

It belongs to the trimethylamine methyltransferase family. In terms of assembly, can form a complex with MttC.

The catalysed reaction is Co(I)-[trimethylamine-specific corrinoid protein] + trimethylamine + H(+) = methyl-Co(III)-[trimethylamine-specific corrinoid protein] + dimethylamine. It participates in one-carbon metabolism; methanogenesis from trimethylamine. Catalyzes the transfer of a methyl group from trimethylamine to the corrinoid cofactor of MttC. The polypeptide is Trimethylamine methyltransferase MttB1 (mttB1) (Methanosarcina mazei (strain ATCC BAA-159 / DSM 3647 / Goe1 / Go1 / JCM 11833 / OCM 88) (Methanosarcina frisia)).